A 686-amino-acid polypeptide reads, in one-letter code: MLPKSVLIVAFLVASSSAQYGVTGMYENLPLESTTVEASGEGSGYNESNDDGFVTGADAVAIDTDCSTKEDGLYAIGGCSPQFLTCSGGIARIMDCPANLIYDQRIIACEYSYNVPECSGVPQDVSSTQAYYPATEETTPAENVTVPAETTVDPYAPVEVATTAAPSEDVPVETTASPYAPVEVETTTAPAEDVTVPEETTVAPYAPVEVYTTAAPANDEPVTRTLLDKTCNGKADGFYSFGQCSDHYIACSNGYTIPMQCPARLSFDEARVICDYTMNVPECQNGSGNYEGSAEETTTEASGELPYSNGYGYEETTTAAADVPSTEGYAPETTAEAWVAPYRLESTTAADVPTTTVGYAPEVIEETTTSEYVEETTTAADVSTTTTVEYVPEVTETTTAPYVEETTTAEYVEETTTAADVPTTTTVAYAPEVTETTTVPYIEETTTVEEATTAADVPTTTGYVPEVIETTTTPYVEETTTAEYVEETSTAADVPTTTTVAYAPEVTETTTVPYIEETTTVEEATTAADVPTTTGYVPEVIETTTTPYVEETTTVEETTTTTVAYAPEVVETTTTPYVEESTTTPYVEETTTALMFHPPQSKATKLPQIHHPASKEHLLSSHAHKTIETVSMDMNLSSSASRDSSSLQSKDDAQLLTKLRSATNRTSTKEATTRTQNMHAHYHRNH.

The signal sequence occupies residues 1–18 (MLPKSVLIVAFLVASSSA). The N-linked (GlcNAc...) asparagine glycan is linked to asparagine 46. Residues 63–120 (DTDCSTKEDGLYAIGGCSPQFLTCSGGIARIMDCPANLIYDQRIIACEYSYNVPECSG) enclose the Chitin-binding type-2 1 domain. A disulfide bond links cysteine 96 and cysteine 109. Residue asparagine 143 is glycosylated (N-linked (GlcNAc...) asparagine). Positions 228–285 (DKTCNGKADGFYSFGQCSDHYIACSNGYTIPMQCPARLSFDEARVICDYTMNVPECQN) constitute a Chitin-binding type-2 2 domain. Cysteine 261 and cysteine 274 are oxidised to a cystine. Residues 284–312 (QNGSGNYEGSAEETTTEASGELPYSNGYG) form a disordered region. 3 N-linked (GlcNAc...) asparagine glycosylation sites follow: asparagine 285, asparagine 635, and asparagine 664. The segment at 658-686 (KLRSATNRTSTKEATTRTQNMHAHYHRNH) is disordered.

Its function is as follows. Required for polar body extrusion during cytokinesis in embryo development. Affects cortical granule size. Shown to have roles in meiotic chromosome segregation, osmotic barrier function and polarization in conjunction with cpg-2. Binds chitin. This chain is Chondroitin proteoglycan 1 (cpg-1), found in Caenorhabditis briggsae.